The primary structure comprises 89 residues: Small ribosomal subunit protein bS20 (89 aa).

Basic residues-rich tracts occupy residues 1–10 and 17–29; these read MANIKSKIKS and ARKRNSMIKSRVK. A disordered region spans residues 1 to 29; sequence MANIKSKIKSIKTMEKARKRNSMIKSRVK.

Belongs to the bacterial ribosomal protein bS20 family.

Its function is as follows. Binds directly to 16S ribosomal RNA. This chain is Small ribosomal subunit protein bS20, found in Mycoplasmopsis pulmonis (strain UAB CTIP) (Mycoplasma pulmonis).